The primary structure comprises 322 residues: TATA box-binding protein-like 2 (322 aa).

The segment at 31–54 is disordered; it reads PALSSTQDSTYLSGRAGPSRESGA. Over residues 32 to 42 the composition is skewed to polar residues; sequence ALSSTQDSTYL.

Belongs to the TBP family.

It is found in the nucleus. In terms of biological role, TATA box-binding transcription factor. Members of the TBP family are differentially required to regulate transcription and development during early embryogenesis. This chain is TATA box-binding protein-like 2, found in Takifugu rubripes (Japanese pufferfish).